The following is a 299-amino-acid chain: Tyrosine recombinase XerC (299 aa).

The Core-binding (CB) domain occupies Met1–Asn85. Residues Arg106 to Asp285 enclose the Tyr recombinase domain. Catalysis depends on residues Arg146, Lys170, His237, Arg240, and His263. Catalysis depends on Tyr272, which acts as the O-(3'-phospho-DNA)-tyrosine intermediate.

The protein belongs to the 'phage' integrase family. XerC subfamily. In terms of assembly, forms a cyclic heterotetrameric complex composed of two molecules of XerC and two molecules of XerD.

Its subcellular location is the cytoplasm. Its function is as follows. Site-specific tyrosine recombinase, which acts by catalyzing the cutting and rejoining of the recombining DNA molecules. The XerC-XerD complex is essential to convert dimers of the bacterial chromosome into monomers to permit their segregation at cell division. It also contributes to the segregational stability of plasmids. This is Tyrosine recombinase XerC from Pseudomonas entomophila (strain L48).